Reading from the N-terminus, the 32-residue chain is Cytochrome b6-f complex subunit 7 (32 aa).

The chain crosses the membrane as a helical span at residues Ala9 to Leu27.

This sequence belongs to the PetM family. As to quaternary structure, the 4 large subunits of the cytochrome b6-f complex are cytochrome b6, subunit IV (17 kDa polypeptide, PetD), cytochrome f and the Rieske protein, while the 4 small subunits are PetG, PetL, PetM and PetN. The complex functions as a dimer.

It localises to the cellular thylakoid membrane. Component of the cytochrome b6-f complex, which mediates electron transfer between photosystem II (PSII) and photosystem I (PSI), cyclic electron flow around PSI, and state transitions. This Prochlorococcus marinus (strain MIT 9301) protein is Cytochrome b6-f complex subunit 7.